The chain runs to 103 residues: Large ribosomal subunit protein eL30 (103 aa).

Belongs to the eukaryotic ribosomal protein eL30 family.

The polypeptide is Large ribosomal subunit protein eL30 (Methanosarcina mazei (strain ATCC BAA-159 / DSM 3647 / Goe1 / Go1 / JCM 11833 / OCM 88) (Methanosarcina frisia)).